The chain runs to 291 residues: Probable alpha-L-glutamate ligase (291 aa).

Residues 104–287 form the ATP-grasp domain; it reads HQLLASQGID…VAGTIIQHLE (184 aa). ATP-binding positions include K141, 178–179, D187, and 211–213; these read EF and RSN. The Mg(2+) site is built by D248, E260, and N262. Residues D248, E260, and N262 each contribute to the Mn(2+) site.

It belongs to the RimK family. Mg(2+) serves as cofactor. Mn(2+) is required as a cofactor.

The protein is Probable alpha-L-glutamate ligase of Xanthomonas campestris pv. campestris (strain 8004).